The following is a 910-amino-acid chain: Staphylococcal nuclease domain-containing protein 1 (910 aa).

N-acetylalanine is present on alanine 2. 3 consecutive TNase-like domains span residues 18–166 (TVQR…MWSE), 193–328 (KPVN…IWRD), and 341–496 (KQFV…LHSK). Threonine 103 bears the Phosphothreonine mark. Lysine 193 carries the N6-acetyllysine modification. Residue threonine 240 is modified to Phosphothreonine. 2 consecutive short sequence motifs (nuclear localization signal) follow at residues 321 to 325 (RRLRI) and 388 to 392 (KKLRP). The residue at position 426 (serine 426) is a Phosphoserine. Lysine 513 is covalently cross-linked (Glycyl lysine isopeptide (Lys-Gly) (interchain with G-Cter in SUMO2)). A TNase-like 4 domain is found at 525–660 (GRSEAVVEYV…KQKKEKVWAH (136 aa)). At lysine 641 the chain carries N6-acetyllysine. Serine 645 carries the post-translational modification Phosphoserine. A Tudor domain is found at 729 to 787 (APRRGEFCIAKFVDGEWYRARVEKVESPAKIHVFYIDYGNREVLPSTRLGTLSPAFSTR). Threonine 779 carries the phosphothreonine modification. A phosphoserine mark is found at serine 781, serine 785, and serine 909.

As to quaternary structure, forms a ternary complex with STAT6 and POLR2A. Associates with the RNA-induced silencing complex (RISC). Interacts with the RISC components AGO2, FMR1 and TNRC6A. Interacts with GTF2E1 and GTF2E2. Interacts with PIM1. Interacts with STAT5. Interacts with SYT11 (via C2 2 domain); the interaction with SYT11 is direct. In terms of assembly, (Microbial infection) Interacts with EAV NSP1. Binds to acidic transactivation domain of EBNA2. Interacts with SARS-CoV-2 NSP9. Post-translationally, phosphorylated by PIM1 in vitro. Ubiquitously expressed.

It localises to the cytoplasm. It is found in the nucleus. The protein resides in the melanosome. The catalysed reaction is Endonucleolytic cleavage to nucleoside 3'-phosphates and 3'-phosphooligonucleotide end-products.. Functionally, endonuclease that mediates miRNA decay of both protein-free and AGO2-loaded miRNAs. As part of its function in miRNA decay, regulates mRNAs involved in G1-to-S phase transition. Functions as a bridging factor between STAT6 and the basal transcription factor. Plays a role in PIM1 regulation of MYB activity. Functions as a transcriptional coactivator for STAT5. In terms of biological role, (Microbial infection) Functions as a transcriptional coactivator for the Epstein-Barr virus nuclear antigen 2 (EBNA2). (Microbial infection) Promotes SARS-CoV-2 RNA synthesis by binding to negative-sense RNA and the viral protein nsp9. In Homo sapiens (Human), this protein is Staphylococcal nuclease domain-containing protein 1 (SND1).